Reading from the N-terminus, the 69-residue chain is Protein SlyX homolog (69 aa).

The protein belongs to the SlyX family.

This Pseudomonas paraeruginosa (strain DSM 24068 / PA7) (Pseudomonas aeruginosa (strain PA7)) protein is Protein SlyX homolog.